Consider the following 688-residue polypeptide: MNFENLLIELGTEELPPKALRKLAESFLANFTEELTKADLAFKSAVWYAAPRRLALNITELAIAQADKIVEKRGPAVSSAFDAGGKPTKAAEGWARGNGITVDQAERLVTDKGEWLVYNAKVEGVETKSLVAAMAQRALDKLPIPKPMRWGSSKTQFIRPVHTATMLLGSELIEGELLGIKSARNIRGHRFMGTGFELDHADNYLTLLKEKGKVIADYESRKALIKADAEKAAAKIGGTADIEDALLEEVTSLVEWPVVLTASFEEKFLSVPSEALVYTMKGDQKYFPVFDDAGKLLPNFIFVANIESKDPAQIISGNEKVVRPRLADAEFFFNTDKKHTLESRLPSLETVLFQQQLGTLKDKVTRISALAAFIAEQTGANAVDAARAGLLSKTDLMTNMVMEFTDTQGTMGMHYARLDGETEAVALAMEEQYKPKFSGDTVPTAAVSCAVALADKLDTLVGIFGIGQAPKGAADPFALRRAAIGVLRIIVENKLPLDLVTLIAKAQELHGANLSNANASEEVLEFLMARFRAWYQDKGINVDVILAVLARRPTRPADFDSRINAVSHFRGLEASSALAAANKRVSNILAKVEGELPSSVNVALLSEAAEQALAAKLAELQPQLAPLFANADYQQALTLLASLRESVDQFFEDVMVMADDAALRNNRLALLNNLREQFLHVADISLLQ.

It belongs to the class-II aminoacyl-tRNA synthetase family. As to quaternary structure, tetramer of two alpha and two beta subunits.

The protein resides in the cytoplasm. The enzyme catalyses tRNA(Gly) + glycine + ATP = glycyl-tRNA(Gly) + AMP + diphosphate. The polypeptide is Glycine--tRNA ligase beta subunit (Shewanella oneidensis (strain ATCC 700550 / JCM 31522 / CIP 106686 / LMG 19005 / NCIMB 14063 / MR-1)).